A 592-amino-acid polypeptide reads, in one-letter code: Cytosolic purine 5'-nucleotidase (592 aa).

Residues 1–15 (MAENNNNNNNNNNNN) show a composition bias toward low complexity. The disordered stretch occupies residues 1-37 (MAENNNNNNNNNNNNVSTPPHQKPHLTTGLRTSSSGL). D122 serves as the catalytic Nucleophile. IMP-binding residues include D122 and D124. Residues D122 and D124 each contribute to the Mg(2+) site. D124 acts as the Proton donor in catalysis. N226 provides a ligand contact to ATP. The segment at 252-273 (LTEEVADEQQQMNSPPLSSLGS) is disordered. Residues 259–273 (EQQQMNSPPLSSLGS) show a composition bias toward polar residues. IMP contacts are provided by R299, D303, K312, T347, N348, S349, and K385. Residue D444 coordinates Mg(2+). ATP contacts are provided by Q547 and R550.

Belongs to the 5'(3')-deoxyribonucleotidase family. In terms of assembly, homotetramer. Requires Mg(2+) as cofactor.

The protein resides in the cytoplasm. It is found in the cytosol. It carries out the reaction a ribonucleoside 5'-phosphate + H2O = a ribonucleoside + phosphate. The enzyme catalyses a 2'-deoxyribonucleoside + a ribonucleoside 5'-phosphate = a ribonucleoside + a 2'-deoxyribonucleoside 5'-phosphate. Broad specificity cytosolic 5'-nucleotidase that catalyzes the dephosphorylation of 6-hydroxypurine nucleoside 5'-monophosphates. In addition, possesses a phosphotransferase activity by which it can transfer a phosphate from a donor nucleoside monophosphate to an acceptor nucleoside. Through these activities regulates the purine nucleoside/nucleotide pools within the cell. This chain is Cytosolic purine 5'-nucleotidase (nt5c2), found in Dictyostelium discoideum (Social amoeba).